Here is a 163-residue protein sequence, read N- to C-terminus: MAEVANNEQQDPQFNIQRVYTKDISFETPNSPAVFQKEWTPEVKLDLDTRSAKLADNVFEVVLSLTVTAKNGEETAFLCEVQQAGIFAINGLTEQQLAHSLGAYCPNILFPYAREAVGSLVARGTFPQLNLAPVNFDALFAQYVNQRQAGAEEAAAKTEEASA.

It belongs to the SecB family. As to quaternary structure, homotetramer, a dimer of dimers. One homotetramer interacts with 1 SecA dimer.

It localises to the cytoplasm. Functionally, one of the proteins required for the normal export of preproteins out of the cell cytoplasm. It is a molecular chaperone that binds to a subset of precursor proteins, maintaining them in a translocation-competent state. It also specifically binds to its receptor SecA. This is Protein-export protein SecB from Shewanella woodyi (strain ATCC 51908 / MS32).